The chain runs to 213 residues: Large ribosomal subunit protein uL3 (213 aa).

The disordered stretch occupies residues 130-161; the sequence is KRGNMTHGSKNHRLPGSTGAGTTPGRVYPGKR.

The protein belongs to the universal ribosomal protein uL3 family. As to quaternary structure, part of the 50S ribosomal subunit. Forms a cluster with proteins L14 and L19.

In terms of biological role, one of the primary rRNA binding proteins, it binds directly near the 3'-end of the 23S rRNA, where it nucleates assembly of the 50S subunit. The polypeptide is Large ribosomal subunit protein uL3 (Picosynechococcus sp. (strain ATCC 27264 / PCC 7002 / PR-6) (Agmenellum quadruplicatum)).